Here is a 347-residue protein sequence, read N- to C-terminus: Extracellular metalloprotease (347 aa).

The N-terminal stretch at 1-20 (MKSRPICSVIPPYILHRIIA) is a signal peptide. The segment at 43–68 (SHHPRPEPHEKLPAGQANRSIHDAEQ) is disordered. A Zn(2+)-binding site is contributed by His162. Glu163 is an active-site residue. Zn(2+) contacts are provided by His166 and Glu186. His264 functions as the Proton donor in the catalytic mechanism.

This sequence belongs to the peptidase M4 family. The cofactor is Ca(2+). Zn(2+) is required as a cofactor.

The protein localises to the secreted. The polypeptide is Extracellular metalloprotease (prt1) (Pectobacterium carotovorum subsp. carotovorum (Erwinia carotovora subsp. carotovora)).